Consider the following 293-residue polypeptide: MATH domain and coiled-coil domain-containing protein At3g58400 (293 aa).

The MATH domain maps to 3-126; sequence RSRSQNLITE…NGELKIVAEI (124 aa). Residues 227 to 285 are a coiled coil; the sequence is KLDWLENKLYEVAQKKEDDEAGETRLREMEEKLKDLKLKCSKMEALVEEEKAKVSAAKA.

The protein is MATH domain and coiled-coil domain-containing protein At3g58400 of Arabidopsis thaliana (Mouse-ear cress).